A 519-amino-acid polypeptide reads, in one-letter code: Ent-kaurene oxidase (519 aa).

The Chloroplast intermembrane segment spans residues M1–V10. A helical membrane pass occupies residues P11–I31. The Cytoplasmic segment spans residues R32 to S519. Position 458 (C458) interacts with heme.

Belongs to the cytochrome P450 family. The cofactor is heme.

It is found in the plastid. The protein localises to the chloroplast outer membrane. The enzyme catalyses ent-kaur-16-ene + 3 reduced [NADPH--hemoprotein reductase] + 3 O2 = ent-kaur-16-en-19-oate + 3 oxidized [NADPH--hemoprotein reductase] + 4 H2O + 4 H(+). It participates in plant hormone biosynthesis; gibberellin biosynthesis. Catalyzes three successive oxidations of the 4-methyl group of ent-kaurene giving kaurenoic acid, a key step in gibberellins (GAs) biosynthesis. GAs, which are involved many processes, including stem elongation, play a central role in plant development. This chain is Ent-kaurene oxidase, found in Salvia miltiorrhiza (Chinese sage).